The sequence spans 508 residues: Lysine-specific permease LysP (508 aa).

12 helical membrane-spanning segments follow: residues 43 to 63 (SMIA…GDVI), 66 to 86 (AGPF…YFLM), 112 to 132 (PAFG…TVAV), 144 to 164 (WLPD…VFSI), 184 to 204 (ITVV…IMGG), 219 to 239 (FVGG…LLVA), 270 to 290 (IFWR…AIIP), 314 to 334 (VGFS…VVSA), 367 to 387 (IPFI…LTSI), 393 to 413 (FTLL…GIAI), 436 to 456 (AKLF…VTLG), and 467 to 487 (WVQG…YLGY).

This sequence belongs to the amino acid-polyamine-organocation (APC) superfamily. Amino acid transporter (AAT) (TC 2.A.3.1) family.

It is found in the cell membrane. It catalyses the reaction L-lysine(out) + H(+)(out) = L-lysine(in) + H(+)(in). Functionally, permease involved in lysine uptake. The chain is Lysine-specific permease LysP from Lactococcus lactis subsp. cremoris (strain MG1363).